Reading from the N-terminus, the 403-residue chain is Na(+)-translocating NADH-quinone reductase subunit B (403 aa).

Helical transmembrane passes span 56–76 (MMIL…WNTG), 121–141 (AYFL…EVLF), 164–184 (LPPS…VVIG), and 195–212 (FLNP…AYPA). The residue at position 230 (Thr230) is an FMN phosphoryl threonine. 6 consecutive transmembrane segments (helical) span residues 237–257 (AGGV…FLGI), 265–285 (TSTL…IAAW), 287–307 (IVAG…LIGS), 312–332 (MFAM…GTLF), 348–368 (WAFG…NPAF), and 371–391 (GMML…HFVV).

This sequence belongs to the NqrB/RnfD family. Composed of six subunits; NqrA, NqrB, NqrC, NqrD, NqrE and NqrF. The cofactor is FMN.

The protein resides in the cell inner membrane. The catalysed reaction is a ubiquinone + n Na(+)(in) + NADH + H(+) = a ubiquinol + n Na(+)(out) + NAD(+). In terms of biological role, NQR complex catalyzes the reduction of ubiquinone-1 to ubiquinol by two successive reactions, coupled with the transport of Na(+) ions from the cytoplasm to the periplasm. NqrA to NqrE are probably involved in the second step, the conversion of ubisemiquinone to ubiquinol. The chain is Na(+)-translocating NADH-quinone reductase subunit B from Azotobacter vinelandii (strain DJ / ATCC BAA-1303).